The primary structure comprises 222 residues: MRIHDIDPDNRPRERFLRSGKESLSPAELLALILRSGTAGLNIIDTCNKLISEHGLERLADLSIQELQKTPGIGEAKAMQIAAIFELQRRLHFARNMNLKVKGARDVFEYMKGRIPDETKEHLFVLFLSTKNQILRHETITIGTLTASLIHPREIFKAAIRESAHSIILVHNHPSGDVQPSNADKQVTSILKKAGDLLQIELLDHVIVGNNDWFSFRDHALL.

The MPN domain maps to 100-222 (KVKGARDVFE…WFSFRDHALL (123 aa)). Zn(2+)-binding residues include His-171, His-173, and Asp-184. Positions 171–184 (HNHPSGDVQPSNAD) match the JAMM motif motif.

It belongs to the UPF0758 family.

The sequence is that of UPF0758 protein CT0611 from Chlorobaculum tepidum (strain ATCC 49652 / DSM 12025 / NBRC 103806 / TLS) (Chlorobium tepidum).